The chain runs to 1219 residues: FK506-binding protein 15 (1219 aa).

The residue at position 1 (methionine 1) is an N-acetylmethionine. Phosphoserine occurs at positions 14 and 23. The tract at residues 41–66 is disordered; sequence YTAPKQPKKGQGTAATGNQATPKTAP. The segment covering 53–66 has biased composition (polar residues); sequence TAATGNQATPKTAP. An important for function in growth cone organization region spans residues 72 to 169; the sequence is PTILVATAVH…AVEFNKQVCI (98 aa). Lysine 92 is modified (N6-acetyllysine). Residues 197 to 290 enclose the PPIase FKBP-type domain; it reads GDSLEVAYTG…VFEVEVRRVK (94 aa). The tract at residues 294–349 is disordered; the sequence is DSGSDGHSVSSRDSAAPSPIPGADNLSADPVVSPPTSIPFKSGEPALRTKSNSLSE. Phosphoserine occurs at positions 307, 311, 326, 344, 346, and 356. A disordered region spans residues 381–433; sequence PQLDSNDSEIEDVNTLQGGGQPVVTPSVQPSLHPAHPALPQMTSQAPQPSVTG. Positions 421–433 are enriched in polar residues; sequence QMTSQAPQPSVTG. 3 coiled-coil regions span residues 522–789, 818–878, and 925–951; these read AVSK…TDQA, DEHL…GVEA, and TLQL…AEER. The residue at position 619 (serine 619) is a Phosphoserine. The tract at residues 739 to 761 is disordered; the sequence is LEKNLSERKKKSAQERSQAEEEI. Residues 931–1219 are disordered; it reads QQEQEKEESS…DDDDDIDWLG (289 aa). 4 positions are modified to phosphoserine: serine 939, serine 940, serine 941, and serine 956. Positions 957 to 971 are enriched in low complexity; that stretch reads QEQSASASSGQPQAP. Phosphoserine occurs at positions 979, 1024, 1056, 1061, 1065, and 1097. Positions 1090–1100 are enriched in polar residues; the sequence is QESSTRLSLTS. Threonine 1099 carries the phosphothreonine modification. Position 1114 is a phosphoserine (serine 1114). Basic and acidic residues predominate over residues 1123-1139; the sequence is LKKDDVTSSTGPHKELS. Serine 1158, serine 1161, serine 1162, serine 1164, and serine 1195 each carry phosphoserine. Threonine 1203 bears the Phosphothreonine mark. Residues 1207–1219 are compositionally biased toward acidic residues; it reads GDDDDDDDIDWLG.

This sequence belongs to the FKBP-type PPIase family. As to quaternary structure, interacts with WIP and actin. Interacts with TBC1D23.

The protein resides in the cytoplasm. It localises to the cell projection. Its subcellular location is the axon. It is found in the early endosome. In terms of biological role, may be involved in the cytoskeletal organization of neuronal growth cones. Seems to be inactive as a PPIase. Involved in the transport of early endosomes at the level of transition between microfilament-based and microtubule-based movement. The chain is FK506-binding protein 15 (FKBP15) from Homo sapiens (Human).